The following is a 161-amino-acid chain: Lipoprotein signal peptidase (161 aa).

Transmembrane regions (helical) follow at residues 9–29 (ISLL…WLIT), 63–83 (KMLF…IFYI), and 88–108 (FNLF…GNFI). Residues aspartate 118 and aspartate 136 contribute to the active site. A helical transmembrane segment spans residues 131–151 (IFNIADSSLTIGVIFVIITLI).

Belongs to the peptidase A8 family.

It localises to the cell membrane. It carries out the reaction Release of signal peptides from bacterial membrane prolipoproteins. Hydrolyzes -Xaa-Yaa-Zaa-|-(S,diacylglyceryl)Cys-, in which Xaa is hydrophobic (preferably Leu), and Yaa (Ala or Ser) and Zaa (Gly or Ala) have small, neutral side chains.. Its pathway is protein modification; lipoprotein biosynthesis (signal peptide cleavage). Functionally, this protein specifically catalyzes the removal of signal peptides from prolipoproteins. In Staphylococcus epidermidis (strain ATCC 35984 / DSM 28319 / BCRC 17069 / CCUG 31568 / BM 3577 / RP62A), this protein is Lipoprotein signal peptidase.